Here is a 328-residue protein sequence, read N- to C-terminus: Glucokinase (328 aa).

Residue A16–T21 participates in ATP binding.

This sequence belongs to the bacterial glucokinase family.

It localises to the cytoplasm. The catalysed reaction is D-glucose + ATP = D-glucose 6-phosphate + ADP + H(+). The protein is Glucokinase of Neisseria meningitidis serogroup C (strain 053442).